We begin with the raw amino-acid sequence, 148 residues long: Urease accessory protein UreE (148 aa).

This sequence belongs to the UreE family.

It is found in the cytoplasm. Functionally, involved in urease metallocenter assembly. Binds nickel. Probably functions as a nickel donor during metallocenter assembly. In Aliarcobacter butzleri (strain RM4018) (Arcobacter butzleri), this protein is Urease accessory protein UreE.